The chain runs to 442 residues: MNAVVIAVLLMLVLSLLRVNIVIALIIGALAGGLTGGLGLGETVKAFTDGLGGNATVAVSYAMLGAFAAALTKTGLPDAMVEASVKLIGNKEDSRKKALSKVLIVLIILIVSCFSQNVVPVHIAFIPVLIPPLLKIFNELEMDRRLIACVITFGLTAPYILLPVGFGQIFQGMLKDNMADAGLNVPLADIPYALIIPVAGMVVGLILSVIVYRKPKQYETKDISGAEASPYTRKSIGIAVLAIVVSLGVQLYLSQTLGVEGMIMGALAGLIVLFVSGVMKRDEADSLITDGMVLMAFIGFVMLVAAGFSNVLTKTGDVESLVKTSAGFIGHSQSLGALLMLIVGLLITMGIGSSFATIPVITTIFVPLCMQLGFSPMATIAIIGAAAALGDAGSPASDSTLGPTSGLSADGQHHHIWDTCVPTFIFYNIPLVIFGWIAALVL.

11 consecutive transmembrane segments (helical) span residues 21 to 41 (IVIALIIGALAGGLTGGLGLG), 51 to 71 (LGGNATVAVSYAMLGAFAAAL), 103 to 123 (LIVLIILIVSCFSQNVVPVHI), 146 to 166 (LIACVITFGLTAPYILLPVGF), 190 to 210 (IPYALIIPVAGMVVGLILSVI), 236 to 256 (IGIAVLAIVVSLGVQLYLSQT), 259 to 279 (VEGMIMGALAGLIVLFVSGVM), 292 to 312 (MVLMAFIGFVMLVAAGFSNVL), 335 to 355 (LGALLMLIVGLLITMGIGSSF), 364 to 384 (IFVPLCMQLGFSPMATIAIIG), and 421 to 441 (VPTFIFYNIPLVIFGWIAALV).

It is found in the cell membrane. The sequence is that of Putative amino acid transporter YuiF (yuiF) from Bacillus subtilis (strain 168).